We begin with the raw amino-acid sequence, 473 residues long: Cysteine--tRNA ligase (473 aa).

C29 provides a ligand contact to Zn(2+). The short motif at 31–41 (PTVYDRAHLGN) is the 'HIGH' region element. Zn(2+) is bound by residues C225, H250, and E254. The short motif at 281-285 (KMSKS) is the 'KMSKS' region element. K284 serves as a coordination point for ATP.

Belongs to the class-I aminoacyl-tRNA synthetase family. As to quaternary structure, monomer. The cofactor is Zn(2+).

Its subcellular location is the cytoplasm. The enzyme catalyses tRNA(Cys) + L-cysteine + ATP = L-cysteinyl-tRNA(Cys) + AMP + diphosphate. This is Cysteine--tRNA ligase from Roseobacter denitrificans (strain ATCC 33942 / OCh 114) (Erythrobacter sp. (strain OCh 114)).